The primary structure comprises 581 residues: ATP-dependent lipid A-core flippase (581 aa).

5 helical membrane-spanning segments follow: residues 15 to 35 (LWPI…ALII), 62 to 82 (ISIW…SSGF), 152 to 172 (IIGL…VLII), 252 to 272 (IIIQ…SSLP), and 274 to 294 (IIDE…IALM). An ABC transmembrane type-1 domain is found at 27–309 (IISIVALIIN…LTNVNANFQK (283 aa)). Residues 341-577 (IKFKNITFTY…KGVYAQIYRL (237 aa)) form the ABC transporter domain. Position 375-382 (375-382 (GSSGAGKS)) interacts with ATP.

The protein belongs to the ABC transporter superfamily. Lipid exporter (TC 3.A.1.106) family. As to quaternary structure, homodimer.

Its subcellular location is the cell membrane. The enzyme catalyses ATP + H2O + lipid A-core oligosaccharideSide 1 = ADP + phosphate + lipid A-core oligosaccharideSide 2.. Its function is as follows. Involved in lipopolysaccharide (LPS) biosynthesis. Translocates lipid A-core from the inner to the outer leaflet of the inner membrane. Transmembrane domains (TMD) form a pore in the inner membrane and the ATP-binding domain (NBD) is responsible for energy generation. The sequence is that of ATP-dependent lipid A-core flippase from Wigglesworthia glossinidia brevipalpis.